Reading from the N-terminus, the 216-residue chain is N-acetyltransferase 9-like protein (216 aa).

In terms of domain architecture, N-acetyltransferase spans 68–215 (VLLNENDEAK…DHVELELMRT (148 aa)).

The protein belongs to the acetyltransferase family. GNAT subfamily.

The protein resides in the cytoplasm. The protein localises to the nucleus. The protein is N-acetyltransferase 9-like protein of Schizosaccharomyces pombe (strain 972 / ATCC 24843) (Fission yeast).